A 208-amino-acid chain; its full sequence is MTGRRARIGVMGGTFDPIHHGHLVAASEVASQFQLEEVIFVPTGQPWQKAERDIAPAEDRYLMTVIATASNPRFTVSRVDIDRPGPTYTIDTLRDLRAELAARGLTDPDLFFITGADALAKIMSWNRAEELLTMAHFVGVTRPGHRLDTPTGLPPDRVSLLEIPALAISSTECRERIRQNRPIWYLVPDGIVQYISKRGLYRRTDGGR.

It belongs to the NadD family.

The catalysed reaction is nicotinate beta-D-ribonucleotide + ATP + H(+) = deamido-NAD(+) + diphosphate. It functions in the pathway cofactor biosynthesis; NAD(+) biosynthesis; deamido-NAD(+) from nicotinate D-ribonucleotide: step 1/1. In terms of biological role, catalyzes the reversible adenylation of nicotinate mononucleotide (NaMN) to nicotinic acid adenine dinucleotide (NaAD). This Acidothermus cellulolyticus (strain ATCC 43068 / DSM 8971 / 11B) protein is Probable nicotinate-nucleotide adenylyltransferase.